Consider the following 312-residue polypeptide: ADP-L-glycero-D-manno-heptose-6-epimerase (312 aa).

NADP(+)-binding positions include Phe-10–Ile-11, Asp-31–Asn-32, Lys-38, Lys-53, Glu-75–Ser-79, and Asn-92. Tyr-140 functions as the Proton acceptor in the catalytic mechanism. Lys-144 provides a ligand contact to NADP(+). Asn-169 serves as a coordination point for substrate. NADP(+)-binding residues include Val-170 and Lys-178. Lys-178 serves as the catalytic Proton acceptor. Substrate is bound by residues Ser-180, His-187, Phe-201–Ser-204, Arg-209, and Tyr-274.

The protein belongs to the NAD(P)-dependent epimerase/dehydratase family. HldD subfamily. As to quaternary structure, homopentamer. NADP(+) is required as a cofactor.

It carries out the reaction ADP-D-glycero-beta-D-manno-heptose = ADP-L-glycero-beta-D-manno-heptose. Its pathway is nucleotide-sugar biosynthesis; ADP-L-glycero-beta-D-manno-heptose biosynthesis; ADP-L-glycero-beta-D-manno-heptose from D-glycero-beta-D-manno-heptose 7-phosphate: step 4/4. It functions in the pathway bacterial outer membrane biogenesis; LPS core biosynthesis. In terms of biological role, catalyzes the interconversion between ADP-D-glycero-beta-D-manno-heptose and ADP-L-glycero-beta-D-manno-heptose via an epimerization at carbon 6 of the heptose. This is ADP-L-glycero-D-manno-heptose-6-epimerase from Photorhabdus laumondii subsp. laumondii (strain DSM 15139 / CIP 105565 / TT01) (Photorhabdus luminescens subsp. laumondii).